The chain runs to 164 residues: Heat shock protein beta-6 (164 aa).

Positions 1 to 72 (MEIPVSVQPS…PTAQVSTDPG (72 aa)) are involved in stabilization of the HSPB1:HSBP6 heterodimer. Residue Ser-16 is modified to Phosphoserine. Residues 56 to 163 (RAPSVALPTA…PLQSPPGAAA (108 aa)) form the sHSP domain. Position 66 is a deamidated glutamine (Gln-66). Ser-157 carries the post-translational modification Phosphoserine.

The protein belongs to the small heat shock protein (HSP20) family. In terms of assembly, homodimer. Small heat shock proteins form high molecular mass oligomers containing variable number of monomers; these oligomers display a very flexible quaternary structure easily exchanging their subunits. Heterooligomer with HSPB1; formed through oligomerization of HSPB1:HSBP6 dimers; subunit exchange leads to formation of at least two different heterooligomeric complexes, differing in variable quantities of HSPB1 and HSPB6 homodimers in addition to HSPB1:HSPB6 heterodimers. Heterooligomer with CRYAB; large heterooligomers consist of CRYAB homodimers and HSPB5:HSPB6 heterodimers but lacking HSPB6 homodimers. Interacts with BAG3. Interacts (phosphorylated) with YWHAZ. Interacts with PDE4A and PDE4D; required for maintenance of the non-phosphorylated state of HSPB6 under basal conditions. Interacts with KDR. Interacts with PRKD1. Post-translationally, phosphorylated at Ser-16 by PKA and probably PKD1K; required to protect cardiomyocytes from apoptosis.

Its subcellular location is the cytoplasm. The protein resides in the nucleus. It localises to the secreted. Functionally, small heat shock protein which functions as a molecular chaperone probably maintaining denatured proteins in a folding-competent state. Seems to have versatile functions in various biological processes. Plays a role in regulating muscle function such as smooth muscle vasorelaxation and cardiac myocyte contractility. May regulate myocardial angiogenesis implicating KDR. Overexpression mediates cardioprotection and angiogenesis after induced damage. Stabilizes monomeric YWHAZ thereby supporting YWHAZ chaperone-like activity. This is Heat shock protein beta-6 (HSPB6) from Bos taurus (Bovine).